Here is a 261-residue protein sequence, read N- to C-terminus: Large ribosomal subunit protein uL10m (261 aa).

Residues Met-1–Tyr-28 constitute a mitochondrion transit peptide. Residues Glu-242–Ser-261 form a disordered region.

This sequence belongs to the universal ribosomal protein uL10 family. In terms of assembly, component of the mitochondrial large ribosomal subunit (mt-LSU). Mature mammalian 55S mitochondrial ribosomes consist of a small (28S) and a large (39S) subunit. The 28S small subunit contains a 12S ribosomal RNA (12S mt-rRNA) and 30 different proteins. The 39S large subunit contains a 16S rRNA (16S mt-rRNA), a copy of mitochondrial valine transfer RNA (mt-tRNA(Val)), which plays an integral structural role, and 52 different proteins. uL10m contributes a single cysteine residue to a zinc-binding site with mL66.

The protein resides in the mitochondrion. The chain is Large ribosomal subunit protein uL10m (MRPL10) from Homo sapiens (Human).